The chain runs to 67 residues: Small ribosomal subunit protein eS17 (67 aa).

It belongs to the eukaryotic ribosomal protein eS17 family.

This is Small ribosomal subunit protein eS17 from Korarchaeum cryptofilum (strain OPF8).